The chain runs to 56 residues: GSICLEPKVVGPCKARIRRFYFDSETGKCTPFIYGGCGGNGNNFETLHACRAICRA.

In terms of domain architecture, BPTI/Kunitz inhibitor spans 4–54 (CLEPKVVGPCKARIRRFYFDSETGKCTPFIYGGCGGNGNNFETLHACRAIC). 3 disulfide bridges follow: Cys4/Cys54, Cys13/Cys37, and Cys29/Cys50.

The protein belongs to the venom Kunitz-type family. Sea anemone type 2 potassium channel toxin subfamily.

It localises to the secreted. It is found in the nematocyst. Its function is as follows. This recombinant serine protease inhibitor inhibits both trypsin (Ki=21 nM) and chymotrypsin (Ki=500 nM). It possesses anti-inflammatory activity in vitro. It inhibits macrophage LPS-induced nitric oxide synthesis, and blocks histamine influence on intracellular calcium concentration in murine bone marrow-derived macrophages, which can indicate inhibition of H1-histamine receptor (HRH1). In vitro, it shows cytoprotective activity in the oxidative stress agent 6-hydroxydopamine (6-OHDA)-induced neurotoxicity model. In this model, it decreases reactive oxygen species (ROS) levels, and increases cell viability in a correlated manner. It is possible that the observed effect is due to the ability of this peptides to act as free-radical scavenger. In vivo, it shows analgesic activity, since it increases hot plate and tail flick withdrawal latencies, when using a mice thermal pain stimulation model. This is PI-stichotoxin-Hcr2o from Radianthus crispa (Leathery sea anemone).